Here is a 316-residue protein sequence, read N- to C-terminus: 4-hydroxy-3-methylbut-2-enyl diphosphate reductase (316 aa).

C18 serves as a coordination point for [4Fe-4S] cluster. (2E)-4-hydroxy-3-methylbut-2-enyl diphosphate-binding residues include H47 and H80. Positions 47 and 80 each coordinate dimethylallyl diphosphate. Residues H47 and H80 each coordinate isopentenyl diphosphate. C102 provides a ligand contact to [4Fe-4S] cluster. H130 is a binding site for (2E)-4-hydroxy-3-methylbut-2-enyl diphosphate. H130 contributes to the dimethylallyl diphosphate binding site. H130 is an isopentenyl diphosphate binding site. E132 serves as the catalytic Proton donor. T171 contacts (2E)-4-hydroxy-3-methylbut-2-enyl diphosphate. Residue C201 participates in [4Fe-4S] cluster binding. The (2E)-4-hydroxy-3-methylbut-2-enyl diphosphate site is built by S229, S230, N231, and S274. The dimethylallyl diphosphate site is built by S229, S230, N231, and S274. Residues S229, S230, N231, and S274 each coordinate isopentenyl diphosphate.

It belongs to the IspH family. [4Fe-4S] cluster serves as cofactor.

It catalyses the reaction isopentenyl diphosphate + 2 oxidized [2Fe-2S]-[ferredoxin] + H2O = (2E)-4-hydroxy-3-methylbut-2-enyl diphosphate + 2 reduced [2Fe-2S]-[ferredoxin] + 2 H(+). The catalysed reaction is dimethylallyl diphosphate + 2 oxidized [2Fe-2S]-[ferredoxin] + H2O = (2E)-4-hydroxy-3-methylbut-2-enyl diphosphate + 2 reduced [2Fe-2S]-[ferredoxin] + 2 H(+). Its pathway is isoprenoid biosynthesis; dimethylallyl diphosphate biosynthesis; dimethylallyl diphosphate from (2E)-4-hydroxy-3-methylbutenyl diphosphate: step 1/1. It participates in isoprenoid biosynthesis; isopentenyl diphosphate biosynthesis via DXP pathway; isopentenyl diphosphate from 1-deoxy-D-xylulose 5-phosphate: step 6/6. In terms of biological role, catalyzes the conversion of 1-hydroxy-2-methyl-2-(E)-butenyl 4-diphosphate (HMBPP) into a mixture of isopentenyl diphosphate (IPP) and dimethylallyl diphosphate (DMAPP). Acts in the terminal step of the DOXP/MEP pathway for isoprenoid precursor biosynthesis. This chain is 4-hydroxy-3-methylbut-2-enyl diphosphate reductase, found in Paracoccus denitrificans (strain Pd 1222).